The following is a 315-amino-acid chain: Spermidine synthase 1 (315 aa).

In terms of domain architecture, PABS spans P25–T262. Residue Q56 coordinates S-adenosyl 3-(methylsulfanyl)propylamine. Putrescine is bound at residue Y86. Residues Q87, D111, E131, D162–G163, and D181 contribute to the S-adenosyl 3-(methylsulfanyl)propylamine site. Residue D181 is the Proton acceptor of the active site. Residues D181–D184 and Y250 contribute to the putrescine site.

Belongs to the spermidine/spermine synthase family.

It carries out the reaction S-adenosyl 3-(methylsulfanyl)propylamine + putrescine = S-methyl-5'-thioadenosine + spermidine + H(+). It participates in amine and polyamine biosynthesis; spermidine biosynthesis; spermidine from putrescine: step 1/1. In Hyoscyamus niger (Black henbane), this protein is Spermidine synthase 1.